The primary structure comprises 143 residues: High mobility group protein B (143 aa).

The segment at 1 to 22 (MSKAASQYATLEDLPSKPKRPQ) is disordered. The HMG box DNA-binding region spans 18–86 (PKRPQTGFFI…TYDKQNDQWK (69 aa)). Blocked amino end (Ala) is present on Ala-70. Composition is skewed to basic and acidic residues over residues 100-120 (AKKA…ELEK) and 131-143 (AKKD…AKKK). A disordered region spans residues 100 to 143 (AKKALKEKTKKSKAAEKELEKSKKKAPAAAPAKKDDKKAPAKKK).

Its subcellular location is the nucleus. The protein localises to the chromosome. The protein is High mobility group protein B of Tetrahymena thermophila.